We begin with the raw amino-acid sequence, 543 residues long: Putative fatty acyl-CoA reductase CG8303 (543 aa).

The tract at residues 1–29 is disordered; that stretch reads MAVITEHGGTTSSPPENNNSIGNGKHRVN. Positions 8–22 are enriched in polar residues; the sequence is GGTTSSPPENNNSIG. The next 3 helical transmembrane spans lie at 386–406, 500–520, and 522–542; these read LFFY…EKLF, VFNV…YFAL, and LTLG…FLVW.

Belongs to the fatty acyl-CoA reductase family.

The protein localises to the membrane. It catalyses the reaction a long-chain fatty acyl-CoA + 2 NADPH + 2 H(+) = a long-chain primary fatty alcohol + 2 NADP(+) + CoA. The enzyme catalyses hexadecanoyl-CoA + 2 NADPH + 2 H(+) = hexadecan-1-ol + 2 NADP(+) + CoA. The catalysed reaction is octadecanoyl-CoA + 2 NADPH + 2 H(+) = octadecan-1-ol + 2 NADP(+) + CoA. Its function is as follows. Catalyzes the reduction of C16 or C18 fatty acyl-CoA to fatty alcohols. This chain is Putative fatty acyl-CoA reductase CG8303, found in Drosophila melanogaster (Fruit fly).